The following is a 180-amino-acid chain: Crossover junction endodeoxyribonuclease RuvC (180 aa).

Active-site residues include aspartate 7, glutamate 66, and aspartate 138. Positions 7, 66, and 138 each coordinate Mg(2+).

The protein belongs to the RuvC family. Homodimer which binds Holliday junction (HJ) DNA. The HJ becomes 2-fold symmetrical on binding to RuvC with unstacked arms; it has a different conformation from HJ DNA in complex with RuvA. In the full resolvosome a probable DNA-RuvA(4)-RuvB(12)-RuvC(2) complex forms which resolves the HJ. Mg(2+) is required as a cofactor.

Its subcellular location is the cytoplasm. It catalyses the reaction Endonucleolytic cleavage at a junction such as a reciprocal single-stranded crossover between two homologous DNA duplexes (Holliday junction).. In terms of biological role, the RuvA-RuvB-RuvC complex processes Holliday junction (HJ) DNA during genetic recombination and DNA repair. Endonuclease that resolves HJ intermediates. Cleaves cruciform DNA by making single-stranded nicks across the HJ at symmetrical positions within the homologous arms, yielding a 5'-phosphate and a 3'-hydroxyl group; requires a central core of homology in the junction. The consensus cleavage sequence is 5'-(A/T)TT(C/G)-3'. Cleavage occurs on the 3'-side of the TT dinucleotide at the point of strand exchange. HJ branch migration catalyzed by RuvA-RuvB allows RuvC to scan DNA until it finds its consensus sequence, where it cleaves and resolves the cruciform DNA. This Burkholderia lata (strain ATCC 17760 / DSM 23089 / LMG 22485 / NCIMB 9086 / R18194 / 383) protein is Crossover junction endodeoxyribonuclease RuvC.